We begin with the raw amino-acid sequence, 527 residues long: GMP synthase [glutamine-hydrolyzing] (527 aa).

The Glutamine amidotransferase type-1 domain maps to 19-212 (KIIVLDYGSQ…AFSICGAKGD (194 aa)). The active-site Nucleophile is Cys-96. Residues His-186 and Glu-188 contribute to the active site. One can recognise a GMPS ATP-PPase domain in the interval 213–402 (WSMANFVDMQ…LGMPDEVVWR (190 aa)). Position 240–246 (240–246 (SGGVDSS)) interacts with ATP.

As to quaternary structure, homodimer.

The enzyme catalyses XMP + L-glutamine + ATP + H2O = GMP + L-glutamate + AMP + diphosphate + 2 H(+). The protein operates within purine metabolism; GMP biosynthesis; GMP from XMP (L-Gln route): step 1/1. Functionally, catalyzes the synthesis of GMP from XMP. The chain is GMP synthase [glutamine-hydrolyzing] from Streptococcus thermophilus (strain ATCC BAA-250 / LMG 18311).